A 443-amino-acid chain; its full sequence is D(2) dopamine receptor (443 aa).

The Extracellular segment spans residues 1 to 37 (MDPLNLSWYDDDPESRNWSRPFNGSEGKVGKPHYNYY). N-linked (GlcNAc...) asparagine glycans are attached at residues Asn-5, Asn-17, and Asn-23. Residues 38–60 (AMLLTLLIFVIVFGNVLVCMAVS) traverse the membrane as a helical segment. Over 61–70 (REKALQTTTN) the chain is Cytoplasmic. A helical membrane pass occupies residues 71 to 93 (YLIVSLAVADLLVATLVMPWVVY). The Extracellular portion of the chain corresponds to 94–108 (LEVVGEWKFSRIHCD). Residues Cys-107 and Cys-182 are joined by a disulfide bond. Residues 109 to 130 (IFVTLDVMMCTASILNLCAISI) traverse the membrane as a helical segment. At 131–151 (DRYTAVAMPMLYNTRYSSKRR) the chain is on the cytoplasmic side. Residues 152-172 (VTVMIAIVWVLSFTISCPLLF) form a helical membrane-spanning segment. Topologically, residues 173 to 188 (GLNNTDQNECIIANPA) are extracellular. A helical transmembrane segment spans residues 189-213 (FVVYSSVVSFYVPFIVTLLVYIKIY). An interaction with PPP1R9B region spans residues 211 to 373 (KIYIVLRRRR…SQQKEKKATQ (163 aa)). Over 214–373 (IVLRRRRKRV…SQQKEKKATQ (160 aa)) the chain is Cytoplasmic. Residues 282–331 (EMLSSTSPPERTRYSPIPPSHHQLTLPDPSHHGLHSTANSPVKPEKNGHA) are disordered. A helical transmembrane segment spans residues 374–395 (MLAIVLGVFIICWLPFFITHIL). Topologically, residues 396 to 409 (NIHCDCNIPPVLYS) are extracellular. Cys-399 and Cys-401 are joined by a disulfide. The chain crosses the membrane as a helical span at residues 410 to 431 (AFTWLGYVNSAVNPIIYTTFNV). Over 432-443 (EFRKAFMKILHC) the chain is Cytoplasmic. A lipid anchor (S-palmitoyl cysteine) is attached at Cys-443.

Belongs to the G-protein coupled receptor 1 family. Forms homo- and heterooligomers with DRD4. The interaction with DRD4 may modulate agonist-induced downstream signaling. Interacts with CADPS and CADPS2. Interacts with GPRASP1, PPP1R9B and CLIC6. Interacts with ARRB2. Interacts with HTR2A. Interacts with DRD1. Interacts with KCNA2. Post-translationally, palmitoylated. Palmitoylation which is required for proper localization to the plasma membrane and stability of the receptor could be carried on by ZDHHC4, ZDHHC3 and ZDHHC8.

It localises to the cell membrane. Its subcellular location is the golgi apparatus membrane. In terms of biological role, dopamine receptor whose activity is mediated by G proteins which inhibit adenylyl cyclase. Positively regulates postnatal regression of retinal hyaloid vessels via suppression of VEGFR2/KDR activity, downstream of OPN5. This is D(2) dopamine receptor (DRD2) from Mustela putorius furo (European domestic ferret).